A 390-amino-acid chain; its full sequence is Tryptophan synthase beta chain 2 (390 aa).

Lys-83 bears the N6-(pyridoxal phosphate)lysine mark.

It belongs to the TrpB family. Tetramer of two alpha and two beta chains. Pyridoxal 5'-phosphate serves as cofactor.

It catalyses the reaction (1S,2R)-1-C-(indol-3-yl)glycerol 3-phosphate + L-serine = D-glyceraldehyde 3-phosphate + L-tryptophan + H2O. It participates in amino-acid biosynthesis; L-tryptophan biosynthesis; L-tryptophan from chorismate: step 5/5. In terms of biological role, the beta subunit is responsible for the synthesis of L-tryptophan from indole and L-serine. This chain is Tryptophan synthase beta chain 2 (trpB2), found in Methanothermobacter marburgensis (strain ATCC BAA-927 / DSM 2133 / JCM 14651 / NBRC 100331 / OCM 82 / Marburg) (Methanobacterium thermoautotrophicum).